A 400-amino-acid chain; its full sequence is Elongation factor Tu (400 aa).

Positions 10–209 (KPHVNIGTIG…EVDKYIPTPE (200 aa)) constitute a tr-type G domain. Residues 19–26 (GHVDHGKT) form a G1 region. A GTP-binding site is contributed by 19–26 (GHVDHGKT). Residue Thr26 participates in Mg(2+) binding. A G2 region spans residues 60-64 (GITIN). Residues 81-84 (DCPG) are G3. Residues 81–85 (DCPGH) and 136–139 (NKAD) each bind GTP. The G4 stretch occupies residues 136-139 (NKAD). A G5 region spans residues 174–176 (SGL).

This sequence belongs to the TRAFAC class translation factor GTPase superfamily. Classic translation factor GTPase family. EF-Tu/EF-1A subfamily. In terms of assembly, monomer.

The protein resides in the cytoplasm. The enzyme catalyses GTP + H2O = GDP + phosphate + H(+). Functionally, GTP hydrolase that promotes the GTP-dependent binding of aminoacyl-tRNA to the A-site of ribosomes during protein biosynthesis. In Heliobacterium modesticaldum (strain ATCC 51547 / Ice1), this protein is Elongation factor Tu.